The chain runs to 211 residues: MRVHVADHPLVAHKLTVLRDERTDSPTFRRLTEELVTLLAYEATRDIAVEPREITTPVTTTVGVHLRSPRPMVVPILRAGLGMLEGMTRLLPTAEVGFLGLQRDEETLEAITYANRLPDDLSGRQCFVLDPMLATGGTLVASIEYLFLRGARHVTAICLLAAPEGLRTVEDAVGDRADVTIVTAAVDERLNERGYIVPGLGDAGDRLYGVV.

5-phospho-alpha-D-ribose 1-diphosphate is bound by residues R78, R103, and 130–138 (DPMLATGGT). Uracil-binding positions include I196 and 201–203 (GDA). Residue D202 coordinates 5-phospho-alpha-D-ribose 1-diphosphate.

The protein belongs to the UPRTase family. It depends on Mg(2+) as a cofactor.

It catalyses the reaction UMP + diphosphate = 5-phospho-alpha-D-ribose 1-diphosphate + uracil. The protein operates within pyrimidine metabolism; UMP biosynthesis via salvage pathway; UMP from uracil: step 1/1. With respect to regulation, allosterically activated by GTP. Its function is as follows. Catalyzes the conversion of uracil and 5-phospho-alpha-D-ribose 1-diphosphate (PRPP) to UMP and diphosphate. The chain is Uracil phosphoribosyltransferase from Beutenbergia cavernae (strain ATCC BAA-8 / DSM 12333 / CCUG 43141 / JCM 11478 / NBRC 16432 / NCIMB 13614 / HKI 0122).